The chain runs to 643 residues: MLLGASLVGVLLFSKLVLKLPWTQVGFSLLFLYLGSGGWRFIRVFIKTIRRDIFGGLVLLKVKAKVRQCLQERRTVPILFASTVRRHPDKTALIFEGTDTHWTFRQLDEYSSSVANFLQARGLASGDVAAIFMENRNEFVGLWLGMAKLGVEAALINTNLRRDALLHCLTTSRARALVFGSEMASAICEVHASLDPSLSLFCSGSWEPGAVPPSTEHLDPLLKDAPKHLPSCPDKGFTDKLFYIYTSGTTGLPKAAIVVHSRYYRMAALVYYGFRMRPNDIVYDCLPLYHSAGNIVGIGQCLLHGMTVVIRKKFSASRFWDDCIKYNCTIVQYIGELCRYLLNQPPREAENQHQVRMALGNGLRQSIWTNFSSRFHIPQVAEFYGATECNCSLGNFDSQVGACGFNSRILSFVYPIRLVRVNEDTMELIRGPDGVCIPCQPGEPGQLVGRIIQKDPLRRFDGYLNQGANNKKIAKDVFKKGDQAYLTGDVLVMDELGYLYFRDRTGDTFRWKGENVSTTEVEGTLSRLLDMADVAVYGVEVPGTEGRAGMAAVASPTGNCDLERFAQVLEKELPLYARPIFLRLLPELHKTGTYKFQKTELRKEGFDPAIVKDPLFYLDAQKGRYVPLDQEAYSRIQAGEEKL.

A run of 2 helical transmembrane segments spans residues 20 to 42 (LPWTQVGFSLLFLYLGSGGWRFI) and 139 to 156 (FVGLWLGMAKLGVEAALI). An AMP-binding site is contributed by 243–254 (YIYTSGTTGLPK).

Belongs to the ATP-dependent AMP-binding enzyme family. As to expression, expressed at highest levels in brain, testis, colon and kidney. Expressed at medium levels in heart and liver, small intestine and stomach. Expressed at low levels in peripheral leukocytes, bone marrow, skeletal muscle and aorta. Expressed in adipose tissue. Expressed in brain gray matter.

The protein resides in the endoplasmic reticulum membrane. The catalysed reaction is a fatty acid(in) = a fatty acid(out). It catalyses the reaction (9Z,12Z)-octadecadienoate(out) = (9Z,12Z)-octadecadienoate(in). It carries out the reaction (9Z)-octadecenoate(out) = (9Z)-octadecenoate(in). The enzyme catalyses hexadecanoate(out) = hexadecanoate(in). The catalysed reaction is a long-chain fatty acid + ATP + CoA = a long-chain fatty acyl-CoA + AMP + diphosphate. It catalyses the reaction hexadecanoate + ATP + CoA = hexadecanoyl-CoA + AMP + diphosphate. It carries out the reaction (E)-hexadec-2-enoate + ATP + CoA = (2E)-hexadecenoyl-CoA + AMP + diphosphate. The enzyme catalyses (9Z)-octadecenoate + ATP + CoA = (9Z)-octadecenoyl-CoA + AMP + diphosphate. The catalysed reaction is (5Z,8Z,11Z,14Z)-eicosatetraenoate + ATP + CoA = (5Z,8Z,11Z,14Z)-eicosatetraenoyl-CoA + AMP + diphosphate. It catalyses the reaction a very long-chain fatty acid + ATP + CoA = a very long-chain fatty acyl-CoA + AMP + diphosphate. It carries out the reaction tetracosanoate + ATP + CoA = tetracosanoyl-CoA + AMP + diphosphate. In terms of biological role, mediates the levels of long-chain fatty acids (LCFA) in the cell by facilitating their transport across cell membranes. Appears to be the principal fatty acid transporter in small intestinal enterocytes. Also functions as an acyl-CoA ligase catalyzing the ATP-dependent formation of fatty acyl-CoA using LCFA and very-long-chain fatty acids (VLCFA) as substrates, which prevents fatty acid efflux from cells and might drive more fatty acid uptake. Plays a role in the formation of the epidermal barrier. Required for fat absorption in early embryogenesis. Probably involved in fatty acid transport across the blood barrier. Indirectly inhibits RPE65 via substrate competition and via production of VLCFA derivatives like lignoceroyl-CoA. Prevents light-induced degeneration of rods and cones. This Homo sapiens (Human) protein is Long-chain fatty acid transport protein 4.